The sequence spans 326 residues: Nine-heme cytochrome c (326 aa).

The N-terminal stretch at 1-30 is a signal peptide; the sequence is MRNGTSLLLLAAIALAGAACLTAMGGTAKA. The heme site is built by His67, His70, Cys77, Cys80, His81, His82, Cys89, Cys92, His93, His111, Cys127, Cys130, His131, Cys141, Cys144, His145, Cys157, Cys160, His161, His227, His230, His248, Cys255, Cys258, His259, His260, Cys271, Cys274, His275, His294, Cys297, Cys300, His301, Cys314, Cys317, and His318.

Monomer. Binds 9 heme groups per subunit.

Its subcellular location is the periplasm. Functionally, may form part of a transmembrane redox complex through which electrons are transferred to the cytoplasm for reduction of sulfate. This is Nine-heme cytochrome c from Desulfovibrio desulfuricans (strain ATCC 27774 / DSM 6949 / MB).